The sequence spans 553 residues: Putative ABC transporter ATP-binding protein BCE_3323 (553 aa).

ABC transporter domains follow at residues 7–245 (AEIN…FRPF) and 295–527 (LSAE…SINR). ATP is bound by residues 41–48 (GGSGSGKT) and 329–336 (GKNGTGKS).

The protein belongs to the ABC transporter superfamily.

The protein resides in the cell membrane. Functionally, probably part of an ABC transporter complex. Responsible for energy coupling to the transport system. The chain is Putative ABC transporter ATP-binding protein BCE_3323 from Bacillus cereus (strain ATCC 10987 / NRS 248).